Reading from the N-terminus, the 392-residue chain is Galactokinase (392 aa).

The alpha-D-galactose site is built by arginine 37, glutamate 43, histidine 44, and aspartate 46. ATP-binding residues include glycine 136, glycine 138, serine 140, and serine 141. Aspartate 186 provides a ligand contact to alpha-D-galactose. Aspartate 186 (proton acceptor) is an active-site residue. Serine 230 is subject to Phosphoserine. Alpha-D-galactose is bound at residue tyrosine 236.

It belongs to the GHMP kinase family. GalK subfamily. As to quaternary structure, homodimer.

It carries out the reaction alpha-D-galactose + ATP = alpha-D-galactose 1-phosphate + ADP + H(+). It functions in the pathway carbohydrate metabolism; galactose metabolism. Catalyzes the transfer of a phosphate from ATP to alpha-D-galactose and participates in the first committed step in the catabolism of galactose. The sequence is that of Galactokinase (GALK1) from Bos taurus (Bovine).